Here is a 717-residue protein sequence, read N- to C-terminus: DNA polymerase iota (717 aa).

The tract at residues 1 to 22 (MEPLHAGAAGSSRAVCSQGPPT) is disordered. The UmuC domain maps to 30–243 (IVHVDLDCFY…NHIKEIPGIG (214 aa)). Mg(2+) is bound by residues Asp-34 and Leu-35. Tyr-39 and Arg-71 together coordinate a 2'-deoxyribonucleoside 5'-triphosphate. Position 126 (Asp-126) interacts with Mg(2+). Glu-127 acts as the Proton acceptor in catalysis. DNA-binding stretches follow at residues 300–307 (QSFSEEDT) and 343–360 (RLVIRRYSDKHCNRESRQ). The Ubiquitin-binding 1 (UBM1) motif lies at 500–517 (VDQEVFKQLPADIQEEIL). Disordered regions lie at residues 549–589 (QMQA…SHPS), 603–622 (KDEQTSQGPTESQGCQFSST), and 644–687 (HRTV…DIDP). Positions 575–589 (PGTSGLSPGSTSHPS) are enriched in low complexity. 2 stretches are compositionally biased toward polar residues: residues 607 to 622 (TSQGPTESQGCQFSST) and 652 to 662 (QTATASHQGLE). The span at 665–679 (QGLESRELDSAEEKL) shows a compositional bias: basic and acidic residues. The Ubiquitin-binding 2 (UBM2) motif lies at 685-702 (IDPQVFYELPEEVQKELM).

This sequence belongs to the DNA polymerase type-Y family. As to quaternary structure, interacts with POLH. Interacts with REV1. Interacts with ubiquitin. It depends on Mg(2+) as a cofactor. The cofactor is Mn(2+). Post-translationally, monoubiquitinated. Protein monoubiquitination prevents POLI binding to ubiquitin via the ubiquitin-binding motif 1 and ubiquitin-binding motif 2. In terms of tissue distribution, detected in testis, and at very low levels in spleen, lung and brain. Detected in round spermatids, but not in prophase spermatocytes.

It localises to the nucleus. It catalyses the reaction DNA(n) + a 2'-deoxyribonucleoside 5'-triphosphate = DNA(n+1) + diphosphate. Error-prone DNA polymerase specifically involved in DNA repair. Plays an important role in translesion synthesis, where the normal high-fidelity DNA polymerases cannot proceed and DNA synthesis stalls. Favors Hoogsteen base-pairing in the active site. Inserts the correct base with high-fidelity opposite an adenosine template. Exhibits low fidelity and efficiency opposite a thymidine template, where it will preferentially insert guanosine. May play a role in hypermutation of immunoglobulin genes. Forms a Schiff base with 5'-deoxyribose phosphate at abasic sites, but may not have lyase activity. The protein is DNA polymerase iota (Poli) of Mus musculus (Mouse).